The chain runs to 872 residues: Alanine--tRNA ligase (872 aa).

Residues H567, H571, C669, and H673 each contribute to the Zn(2+) site.

It belongs to the class-II aminoacyl-tRNA synthetase family. It depends on Zn(2+) as a cofactor.

The protein localises to the cytoplasm. The catalysed reaction is tRNA(Ala) + L-alanine + ATP = L-alanyl-tRNA(Ala) + AMP + diphosphate. Catalyzes the attachment of alanine to tRNA(Ala) in a two-step reaction: alanine is first activated by ATP to form Ala-AMP and then transferred to the acceptor end of tRNA(Ala). Also edits incorrectly charged Ser-tRNA(Ala) and Gly-tRNA(Ala) via its editing domain. This chain is Alanine--tRNA ligase, found in Streptococcus agalactiae serotype V (strain ATCC BAA-611 / 2603 V/R).